A 366-amino-acid polypeptide reads, in one-letter code: Histidinol-phosphate aminotransferase 2 (366 aa).

Residues 1–11 show a composition bias toward polar residues; that stretch reads MQVKDQLSSLQ. Residues 1-21 form a disordered region; it reads MQVKDQLSSLQPYKPGKSPEQ. Position 222 is an N6-(pyridoxal phosphate)lysine (K222).

This sequence belongs to the class-II pyridoxal-phosphate-dependent aminotransferase family. Histidinol-phosphate aminotransferase subfamily. In terms of assembly, homodimer. Pyridoxal 5'-phosphate serves as cofactor.

It catalyses the reaction L-histidinol phosphate + 2-oxoglutarate = 3-(imidazol-4-yl)-2-oxopropyl phosphate + L-glutamate. It functions in the pathway amino-acid biosynthesis; L-histidine biosynthesis; L-histidine from 5-phospho-alpha-D-ribose 1-diphosphate: step 7/9. This is Histidinol-phosphate aminotransferase 2 from Bacillus thuringiensis subsp. konkukian (strain 97-27).